The following is a 255-amino-acid chain: Hydroxyethylthiazole kinase (255 aa).

Met38 is a substrate binding site. ATP contacts are provided by Arg114 and Thr160. Gly187 contributes to the substrate binding site.

Belongs to the Thz kinase family. The cofactor is Mg(2+).

It catalyses the reaction 5-(2-hydroxyethyl)-4-methylthiazole + ATP = 4-methyl-5-(2-phosphooxyethyl)-thiazole + ADP + H(+). It functions in the pathway cofactor biosynthesis; thiamine diphosphate biosynthesis; 4-methyl-5-(2-phosphoethyl)-thiazole from 5-(2-hydroxyethyl)-4-methylthiazole: step 1/1. Its function is as follows. Catalyzes the phosphorylation of the hydroxyl group of 4-methyl-5-beta-hydroxyethylthiazole (THZ). In Lysinibacillus sphaericus (strain C3-41), this protein is Hydroxyethylthiazole kinase.